A 528-amino-acid polypeptide reads, in one-letter code: Inorganic phosphate transporter 1-2 (528 aa).

The Cytoplasmic portion of the chain corresponds to 1–24; it reads MAGSQLNVLVKLDQAKTQWYHFMA. A helical membrane pass occupies residues 25 to 45; sequence IVIAGMGFFTDAYDLFCIALV. Residues 46-71 lie on the Extracellular side of the membrane; that stretch reads TKLLGRLYYTDITKPNPGTLPPNVSS. A helical membrane pass occupies residues 72 to 92; that stretch reads AVTGVALCGTLAGQLFFGWLG. Topologically, residues 93-99 are cytoplasmic; the sequence is DKLGRKS. The chain crosses the membrane as a helical span at residues 100–120; the sequence is VYGFTLILMVVCSIASGLSFG. Over 121–125 the chain is Extracellular; it reads HTPKS. Residues 126–146 traverse the membrane as a helical segment; that stretch reads VIATLCFFRFWLGFGIGGDYP. Over 147–163 the chain is Cytoplasmic; that stretch reads LSATIMSEYASKKTRGA. A helical transmembrane segment spans residues 164–184; it reads FIAAVFAMQGFGILFGAIVAL. The Extracellular portion of the chain corresponds to 185–212; the sequence is VVSAGFRHAYPAPSYAQNPAASLAPQAD. The helical transmembrane segment at 213–232 threads the bilayer; it reads YTWRLILMFGTIPAGLTYYW. Over 233 to 296 the chain is Cytoplasmic; the sequence is RMKMPETARY…RQFMKRHGMH (64 aa). A helical transmembrane segment spans residues 297 to 317; that stretch reads LLATTSTWFLLDIAFYSQNLF. Residues 318-348 are Extracellular-facing; that stretch reads QKDIFSKVGWIPPAKTMNALEELYRISRAQA. A helical membrane pass occupies residues 349 to 369; it reads LIALCGTIPGYWFTVAFIDIV. At 370 to 371 the chain is on the cytoplasmic side; it reads GR. The chain crosses the membrane as a helical span at residues 372–392; that stretch reads FWIQIMGFFMMTVFMLALGVP. The Extracellular portion of the chain corresponds to 393–405; that stretch reads YDHWTHPAHHTGF. The helical transmembrane segment at 406-426 threads the bilayer; the sequence is VVLYALTFFFANFGPNSTTFI. Residues 427 to 442 are Cytoplasmic-facing; it reads VPAEIFPARLRSTCHG. Residues 443–463 form a helical membrane-spanning segment; that stretch reads ISAASGKAGAIIGAFGFLYAA. Over 464 to 481 the chain is Extracellular; sequence QDQHNPDAGYSRGIGIRN. A helical transmembrane segment spans residues 482–502; it reads ALFVLAGTNFLGMLMTLLVPE. Topologically, residues 503 to 528 are cytoplasmic; sequence SKGLSLEEMSKDNVVDETAQEAIAQA.

Belongs to the major facilitator superfamily. Phosphate:H(+) symporter (TC 2.A.1.9) family. Expressed in the root stele and leaf phloem and xylem.

It localises to the membrane. In terms of biological role, low-affinity transporter for inorganic phosphate (Pi). Involved in internal Pi transport from root to shoot. Responsible for most of the PHR2-mediated accumulation of excess shoot Pi under abundant Pi conditions, but not for PHO2-mediated accumulation of excess shoot Pi. Acts as a H(+):phosphate symporter. The protein is Inorganic phosphate transporter 1-2 (PTH1-2) of Oryza sativa subsp. japonica (Rice).